A 638-amino-acid polypeptide reads, in one-letter code: Bifunctional protein glk (638 aa).

Positions 1 to 20 (MSTGVQTKAAPGAGQHADGP) are disordered. Positions 1 to 341 (MSTGVQTKAA…QLSNRAGGSS (341 aa)) are glucokinase. ATP is bound at residue 24-29 (ADIGGT). The 77-residue stretch at 342 to 418 (SAVFERIRQM…LKLATGLTGT (77 aa)) folds into the HTH rpiR-type domain. A putative HTH-type transcriptional regulator region spans residues 342–638 (SAVFERIRQM…SHGAASSARD (297 aa)). The segment at residues 378 to 397 (IVDIARKADVSQPTVIRFCR) is a DNA-binding region (H-T-H motif). The SIS domain maps to 462-601 (AIDLLNGARR…AVGVAIRRAV (140 aa)).

This sequence in the N-terminal section; belongs to the bacterial glucokinase family.

It localises to the cytoplasm. The catalysed reaction is D-glucose + ATP = D-glucose 6-phosphate + ADP + H(+). This Paraburkholderia xenovorans (strain LB400) protein is Bifunctional protein glk (glk).